Consider the following 65-residue polypeptide: Small ribosomal subunit protein bS21 (65 aa).

This sequence belongs to the bacterial ribosomal protein bS21 family.

This chain is Small ribosomal subunit protein bS21, found in Flavobacterium psychrophilum (strain ATCC 49511 / DSM 21280 / CIP 103535 / JIP02/86).